A 366-amino-acid polypeptide reads, in one-letter code: Histone-lysine N-methyltransferase SETD7 (366 aa).

3 MORN repeats span residues 36-58, 59-81, and 106-128; these read FEGN…DGST, LEGY…DGGV, and FKGQ…DGGS. The SET domain maps to 214 to 336; it reads ERVYVAESLI…ADEELTVAYG (123 aa). S-adenosyl-L-methionine is bound by residues 226-228, asparagine 296, histidine 297, and glutamate 356; that span reads AGE.

It belongs to the class V-like SAM-binding methyltransferase superfamily. Histone-lysine methyltransferase family. SET7 subfamily. In terms of assembly, interacts with IPF1/PDX-1. As to expression, widely expressed. Expressed in pancreatic islets.

It is found in the nucleus. The protein resides in the chromosome. It carries out the reaction L-lysyl(4)-[histone H3] + S-adenosyl-L-methionine = N(6)-methyl-L-lysyl(4)-[histone H3] + S-adenosyl-L-homocysteine + H(+). It catalyses the reaction L-lysyl-[protein] + S-adenosyl-L-methionine = N(6)-methyl-L-lysyl-[protein] + S-adenosyl-L-homocysteine + H(+). Histone methyltransferase that specifically monomethylates 'Lys-4' of histone H3. H3 'Lys-4' methylation represents a specific tag for epigenetic transcriptional activation. Plays a central role in the transcriptional activation of genes such as collagenase or insulin. Recruited by IPF1/PDX-1 to the insulin promoter, leading to activate transcription. Also has methyltransferase activity toward non-histone proteins such as CGAS, p53/TP53, TAF10, and possibly TAF7 by recognizing and binding the [KR]-[STA]-K in substrate proteins. Monomethylates 'Lys-189' of TAF10, leading to increase the affinity of TAF10 for RNA polymerase II. Monomethylates 'Lys-372' of p53/TP53, stabilizing p53/TP53 and increasing p53/TP53-mediated transcriptional activation. Monomethylates 'Lys-491' of CGAS, promoting interaction between SGF29 and CGAS. The polypeptide is Histone-lysine N-methyltransferase SETD7 (SETD7) (Homo sapiens (Human)).